The sequence spans 241 residues: Lysoplasmalogenase TMEM86A (241 aa).

The Cytoplasmic portion of the chain corresponds to 1-13 (MVSPVTVVKSEGP). A helical membrane pass occupies residues 14 to 30 (KLVPFFKATCVYFVLWL). Topologically, residues 31–36 (PSSSPS) are extracellular. Residues 37 to 59 (WVSALIKCLPIFCLWLFLLAHGV) form a helical membrane-spanning segment. Over 60–67 (RFLLAHPS) the chain is Cytoplasmic. Residues 68 to 87 (ASLIFVGLVFSAVGDAFLIW) traverse the membrane as a helical segment. Over 88-96 (QDHGYFEHG) the chain is Extracellular. Residues 97–113 (LLMFAVAHILYAAAFGM) form a helical membrane-spanning segment. Over 114 to 119 (RPLALR) the chain is Cytoplasmic. Residues 120 to 136 (TGLVIGVLSGLCYALLY) traverse the membrane as a helical segment. Residues 137 to 142 (PGLSGA) are Extracellular-facing. A helical transmembrane segment spans residues 143–159 (FTYLVGVYVALISFMGW). Residues 160–176 (RAMAGLRLVGAAWRWTE) lie on the Cytoplasmic side of the membrane. A helical transmembrane segment spans residues 177 to 195 (LAAGGGALLFILSDLTIAL). Over 196–206 (NKFCFPVPYSR) the chain is Extracellular. Residues 207 to 225 (ALIMSTYYAAQMLIALSAV) form a helical membrane-spanning segment. Residues 226 to 241 (ESREPVGEDYRLSKAD) are Cytoplasmic-facing.

The protein belongs to the TMEM86 family. In terms of tissue distribution, highly expressed in the jejunum, white adipose tissue, kidney and macrophages.

Its subcellular location is the endoplasmic reticulum membrane. The enzyme catalyses a 1-O-(1Z-alkenyl)-sn-glycero-3-phosphocholine + H2O = a 2,3-saturated aldehyde + sn-glycerol 3-phosphocholine. It carries out the reaction a 1-O-(1Z-alkenyl)-sn-glycero-3-phosphoethanolamine + H2O = a 2,3-saturated aldehyde + sn-glycero-3-phosphoethanolamine. Functionally, catalyzes the hydrolysis of the vinyl ether bond of choline or ethanolamine lysoplasmalogens, forming fatty aldehyde and glycerophosphocholine or glycerophosphoethanolamine, respectively and is specific for the sn-2-deacylated (lyso) form of plasmalogen. Plays an important role in lysoplasmalogen metabolism in the adipocyte tissue and macrophages. This Mus musculus (Mouse) protein is Lysoplasmalogenase TMEM86A (Tmem86a).